We begin with the raw amino-acid sequence, 393 residues long: Methylthioribose kinase (393 aa).

Residues Asn-38, Lys-53, and 107–109 (EDL) contribute to the ATP site. Asp-225 serves as a coordination point for substrate. An ATP-binding site is contributed by 242 to 244 (DPE). Arg-332 provides a ligand contact to substrate.

Belongs to the methylthioribose kinase family. As to quaternary structure, homodimer.

The catalysed reaction is 5-(methylsulfanyl)-D-ribose + ATP = 5-(methylsulfanyl)-alpha-D-ribose 1-phosphate + ADP + H(+). Its pathway is amino-acid biosynthesis; L-methionine biosynthesis via salvage pathway; S-methyl-5-thio-alpha-D-ribose 1-phosphate from S-methyl-5'-thioadenosine (hydrolase route): step 2/2. Functionally, catalyzes the phosphorylation of methylthioribose into methylthioribose-1-phosphate. This chain is Methylthioribose kinase, found in Bacillus cereus (strain ZK / E33L).